A 67-amino-acid polypeptide reads, in one-letter code: Large ribosomal subunit protein bL31 (67 aa).

This sequence belongs to the bacterial ribosomal protein bL31 family. Type A subfamily. Part of the 50S ribosomal subunit.

Its function is as follows. Binds the 23S rRNA. This chain is Large ribosomal subunit protein bL31, found in Leptospira borgpetersenii serovar Hardjo-bovis (strain JB197).